Reading from the N-terminus, the 155-residue chain is Ribosomal RNA large subunit methyltransferase H (155 aa).

S-adenosyl-L-methionine contacts are provided by residues leucine 72, glycine 104, and 123 to 128 (LAKITL).

It belongs to the RNA methyltransferase RlmH family. Homodimer.

The protein resides in the cytoplasm. It catalyses the reaction pseudouridine(1915) in 23S rRNA + S-adenosyl-L-methionine = N(3)-methylpseudouridine(1915) in 23S rRNA + S-adenosyl-L-homocysteine + H(+). Specifically methylates the pseudouridine at position 1915 (m3Psi1915) in 23S rRNA. The chain is Ribosomal RNA large subunit methyltransferase H from Mycoplasma capricolum subsp. capricolum (strain California kid / ATCC 27343 / NCTC 10154).